The sequence spans 487 residues: Histamine H1 receptor (487 aa).

Residues M1–P29 lie on the Extracellular side of the membrane. N5 and N18 each carry an N-linked (GlcNAc...) asparagine glycan. A helical transmembrane segment spans residues L30–Y50. At A51–L64 the chain is on the cytoplasmic side. A helical membrane pass occupies residues Y65–L89. Residues M90–R97 lie on the Extracellular side of the membrane. A helical transmembrane segment spans residues P98–I123. A disulfide bond links C100 and C180. Residues D107 and T112 each coordinate histamine. Positions D107–T112 are important for agonist binding. Residues D124–A144 lie on the Cytoplasmic side of the membrane. Phosphothreonine occurs at positions 140 and 142. Residues S145–G164 form a helical membrane-spanning segment. Over W165–T188 the chain is Extracellular. A helical transmembrane segment spans residues W189 to A211. N198 is a histamine binding site. Over K212–Q416 the chain is Cytoplasmic. S230 bears the Phosphoserine mark. The segment covering K238–K261 has biased composition (basic and acidic residues). The segment at K238–Q291 is disordered. T279 is subject to Phosphothreonine. S344 and S347 each carry phosphoserine. The segment at E345–G379 is disordered. Polar residues predominate over residues G353–T369. 3 positions are modified to phosphoserine: S380, S396, and S398. The chain crosses the membrane as a helical span at residues L417–F440. An important for agonist binding region spans residues F424–W428. Position 431 (Y431) interacts with histamine. A disulfide bond links C441 and C444. The Extracellular portion of the chain corresponds to C441 to N446. The helical transmembrane segment at E447–P469 threads the bilayer. The Cytoplasmic segment spans residues L470 to S487.

It belongs to the G-protein coupled receptor 1 family. Phosphorylation at sites in the second and third cytoplasmic loops independently contribute to agonist-induced receptor down-regulation.

Its subcellular location is the cell membrane. Functionally, G-protein-coupled receptor for histamine, a biogenic amine that functions as an immune modulator and a neurotransmitter. Through the H1 receptor, histamine mediates the contraction of smooth muscles and increases capillary permeability due to contraction of terminal venules. Also mediates neurotransmission in the central nervous system and thereby regulates circadian rhythms, emotional and locomotor activities as well as cognitive functions. This Homo sapiens (Human) protein is Histamine H1 receptor.